A 315-amino-acid polypeptide reads, in one-letter code: Olfactory receptor 3A1 (315 aa).

Topologically, residues 1–28 (MQPESGANGTVIAEFILLGLLEAPGLQP) are extracellular. N8 carries N-linked (GlcNAc...) asparagine glycosylation. The helical transmembrane segment at 29–52 (VVFVLFLFAYLVTVGGNLSILAAV) threads the bilayer. Topologically, residues 53–60 (LVEPELHT) are cytoplasmic. A helical membrane pass occupies residues 61 to 82 (PMYFFLGNLSVLDVGCISVTVP). Topologically, residues 83–103 (SMLSRLLSRKRAVPCGACLTQ) are extracellular. C100 and C192 are oxidised to a cystine. The chain crosses the membrane as a helical span at residues 104 to 123 (LFFFHLFVGVDCFLLIAMAY). Over 124–143 (DRFLAICRPLTYSTRMSQTV) the chain is Cytoplasmic. Residues 144-161 (QRMLVAASWACAFTNALT) traverse the membrane as a helical segment. Over 162–199 (HTVAMSTLNFCGPNVINHFYCDLPQLCQLSCSSTQLSE) the chain is Extracellular. The chain crosses the membrane as a helical span at residues 200 to 223 (LLLFAVGFIMAGTSMALIVISYIH). The Cytoplasmic segment spans residues 224-240 (VAAAVLRIRSVEGRKKA). The chain crosses the membrane as a helical span at residues 241–264 (FSTCGSHLTVVAIFYGSGIFNYMR). At 265–275 (LGSTKLSDKDK) the chain is on the extracellular side. A helical membrane pass occupies residues 276–295 (AVGIFNTVINPMLNPIIYSF). Residues 296 to 315 (RNPDVQSAIWRMLTGRRSLA) are Cytoplasmic-facing.

The protein belongs to the G-protein coupled receptor 1 family.

The protein resides in the cell membrane. Functionally, odorant receptor. In Gorilla gorilla gorilla (Western lowland gorilla), this protein is Olfactory receptor 3A1 (OR3A1).